A 163-amino-acid polypeptide reads, in one-letter code: Inorganic pyrophosphatase (163 aa).

The substrate site is built by Lys-21, Arg-35, and Tyr-47. Mg(2+) is bound by residues Asp-57, Asp-62, and Asp-94. Residue Tyr-131 coordinates substrate.

Belongs to the PPase family. As to quaternary structure, homohexamer. The cofactor is Mg(2+).

It is found in the cytoplasm. The enzyme catalyses diphosphate + H2O = 2 phosphate + H(+). Functionally, catalyzes the hydrolysis of inorganic pyrophosphate (PPi) forming two phosphate ions. The protein is Inorganic pyrophosphatase of Halalkalibacterium halodurans (strain ATCC BAA-125 / DSM 18197 / FERM 7344 / JCM 9153 / C-125) (Bacillus halodurans).